The sequence spans 104 residues: SOSS complex subunit C (104 aa).

N-acetylalanine is present on Ala2. Ser50 is modified (phosphoserine).

It belongs to the SOSS-C family. Component of the SOSS complex, composed of SOSS-B (SOSS-B1/NABP2 or SOSS-B2/NABP1), SOSS-A/INTS3 and SOSS-C/INIP. SOSS complexes containing SOSS-B1/NABP2 are more abundant than complexes containing SOSS-B2/NABP1. Interacts with INTS3; the interaction is direct.

Its subcellular location is the nucleus. Functionally, component of the SOSS complex, a multiprotein complex that functions downstream of the MRN complex to promote DNA repair and G2/M checkpoint. The SOSS complex associates with single-stranded DNA at DNA lesions and influences diverse endpoints in the cellular DNA damage response including cell-cycle checkpoint activation, recombinational repair and maintenance of genomic stability. Required for efficient homologous recombination-dependent repair of double-strand breaks (DSBs) and ATM-dependent signaling pathways. This Homo sapiens (Human) protein is SOSS complex subunit C (INIP).